Reading from the N-terminus, the 197-residue chain is Protein GrpE (197 aa).

Residues 1–39 (MSSKEQKTPEGQAPEEIIMDQHEEIEAVEPEASAEQVDP) form a disordered region.

The protein belongs to the GrpE family. As to quaternary structure, homodimer.

Its subcellular location is the cytoplasm. In terms of biological role, participates actively in the response to hyperosmotic and heat shock by preventing the aggregation of stress-denatured proteins, in association with DnaK and GrpE. It is the nucleotide exchange factor for DnaK and may function as a thermosensor. Unfolded proteins bind initially to DnaJ; upon interaction with the DnaJ-bound protein, DnaK hydrolyzes its bound ATP, resulting in the formation of a stable complex. GrpE releases ADP from DnaK; ATP binding to DnaK triggers the release of the substrate protein, thus completing the reaction cycle. Several rounds of ATP-dependent interactions between DnaJ, DnaK and GrpE are required for fully efficient folding. The polypeptide is Protein GrpE (Escherichia coli O45:K1 (strain S88 / ExPEC)).